A 291-amino-acid polypeptide reads, in one-letter code: Beta-lactamase CTX-M-14 (291 aa).

Positions 1-28 are cleaved as a signal peptide; sequence MVTKRVQRMMFAAAACIPLLLGSAPLYA. S73 functions as the Nucleophile; acyl-ester intermediate in the catalytic mechanism. Residues K76, S133, E169, and S240 each contribute to the a beta-lactam site.

This sequence belongs to the class-A beta-lactamase family. As to quaternary structure, monomer.

The protein localises to the secreted. It catalyses the reaction a beta-lactam + H2O = a substituted beta-amino acid. Its activity is regulated as follows. Inhibited by the beta-lactamase-blocking agents clavulanic acid, tazobactam and sulbactam. In terms of biological role, extended-spectrum beta-lactamase (ESBL) which confers resistance to penicillins, as well as first, second, and third-generation cephalosporins. Has cefotaxime-hydrolyzing activity. This chain is Beta-lactamase CTX-M-14, found in Escherichia coli.